We begin with the raw amino-acid sequence, 106 residues long: Small ribosomal subunit protein bS6 (106 aa).

This sequence belongs to the bacterial ribosomal protein bS6 family.

Its function is as follows. Binds together with bS18 to 16S ribosomal RNA. The sequence is that of Small ribosomal subunit protein bS6 from Cyanothece sp. (strain PCC 7425 / ATCC 29141).